Here is a 188-residue protein sequence, read N- to C-terminus: Transmembrane protein 160 (188 aa).

Residues 1–96 (MGGGWWWARA…ISFMQSDMGR (96 aa)) constitute a mitochondrion transit peptide. The disordered stretch occupies residues 25-52 (PPRPRSGGARGSFAPGHGPRAGASPPPV). Low complexity predominate over residues 29-38 (RSGGARGSFA). Position 48 is a phosphoserine (serine 48). 2 helical membrane passes run 102–122 (FFLL…VGLA) and 135–155 (AAAG…AVGL).

It belongs to the TMEM160 family.

It is found in the mitochondrion inner membrane. The protein is Transmembrane protein 160 of Bos taurus (Bovine).